The sequence spans 89 residues: Small ribosomal subunit protein uS15 (89 aa).

It belongs to the universal ribosomal protein uS15 family. As to quaternary structure, part of the 30S ribosomal subunit. Forms a bridge to the 50S subunit in the 70S ribosome, contacting the 23S rRNA.

Functionally, one of the primary rRNA binding proteins, it binds directly to 16S rRNA where it helps nucleate assembly of the platform of the 30S subunit by binding and bridging several RNA helices of the 16S rRNA. In terms of biological role, forms an intersubunit bridge (bridge B4) with the 23S rRNA of the 50S subunit in the ribosome. The protein is Small ribosomal subunit protein uS15 of Roseiflexus sp. (strain RS-1).